The primary structure comprises 633 residues: uncharacterized protein (633 aa).

This is an uncharacterized protein from Archaeoglobus fulgidus (strain ATCC 49558 / DSM 4304 / JCM 9628 / NBRC 100126 / VC-16).